The primary structure comprises 623 residues: Putative ABC transporter ATP-binding protein MG014 (623 aa).

The region spanning 16–325 (LILAPFFTFA…YIVLGFILTS (310 aa)) is the ABC transmembrane type-1 domain. 6 consecutive transmembrane segments (helical) span residues 27 to 47 (IVIDLIIPSFLASAISVVFSI), 81 to 101 (VLATTVILLALCGLFFGLISI), 157 to 177 (FLRLIIRAPLLFIGGLVFAVT), 181 to 201 (DMSISLLITFPLILLVIGILN), 266 to 286 (NIPFTFFLSSLTIIIALLLVF), and 307 to 327 (IFAFFQYNFYIVLGFILTSLT). The 247-residue stretch at 365 to 611 (LEFRNISFGL…CSLYQKMKES (247 aa)) folds into the ABC transporter domain. 400–407 (GPTGSGKS) provides a ligand contact to ATP.

This sequence belongs to the ABC transporter superfamily.

It localises to the cell membrane. This chain is Putative ABC transporter ATP-binding protein MG014, found in Mycoplasma genitalium (strain ATCC 33530 / DSM 19775 / NCTC 10195 / G37) (Mycoplasmoides genitalium).